A 282-amino-acid chain; its full sequence is Serine/arginine-rich splicing factor 8 (282 aa).

Ser2 carries the N-acetylserine modification. 2 positions are modified to phosphoserine: Ser2 and Ser26. The RRM domain occupies 14–92 (ITLKVDNLTY…RELRVQVARY (79 aa)). Residues 91 to 282 (RYGRRDLPRS…SPEEEGQMSS (192 aa)) are disordered. Positions 93 to 107 (GRRDLPRSRQGEPRG) are enriched in basic and acidic residues. Composition is skewed to basic residues over residues 116-136 (RRSR…RSRS) and 144-154 (SRSRSRYRGSR). Low complexity-rich tracts occupy residues 155-177 (YSRS…PYSR) and 185-200 (YGGS…NSRY). 5 positions are modified to phosphoserine: Ser156, Ser158, Ser171, Ser173, and Ser196. Residues 201–210 (SRYHSSRSHS) are compositionally biased toward basic residues. 2 stretches are compositionally biased toward low complexity: residues 211–227 (KSGS…SKSS) and 234–255 (SSSV…SPPR). The span at 256–271 (VSKRKSKSRSRSKRPP) shows a compositional bias: basic residues. At Ser273 the chain carries Phosphoserine.

Belongs to the splicing factor SR family. Strongly expressed in pancreas, spleen and prostate. Weakly expressed in lung, liver and thymus.

It localises to the nucleus. Functionally, involved in pre-mRNA alternative splicing. The protein is Serine/arginine-rich splicing factor 8 (SRSF8) of Homo sapiens (Human).